Consider the following 160-residue polypeptide: Ribosomal RNA large subunit methyltransferase H (160 aa).

Residues leucine 76, glycine 108, and 127–132 contribute to the S-adenosyl-L-methionine site; that span reads LGKMTW.

Belongs to the RNA methyltransferase RlmH family. As to quaternary structure, homodimer.

It is found in the cytoplasm. It carries out the reaction pseudouridine(1915) in 23S rRNA + S-adenosyl-L-methionine = N(3)-methylpseudouridine(1915) in 23S rRNA + S-adenosyl-L-homocysteine + H(+). Specifically methylates the pseudouridine at position 1915 (m3Psi1915) in 23S rRNA. The polypeptide is Ribosomal RNA large subunit methyltransferase H (Sinorhizobium fredii (strain NBRC 101917 / NGR234)).